The primary structure comprises 109 residues: Cytochrome c6 (109 aa).

A signal peptide spans 1–25 (MFKNIIIVVAVTLCALFTNEHVVYS). C39, C42, H43, and M83 together coordinate heme c.

It belongs to the cytochrome c family. PetJ subfamily. In terms of assembly, monomer. Binds 1 heme c group covalently per subunit.

It localises to the plastid. It is found in the chloroplast thylakoid lumen. In terms of biological role, functions as an electron carrier between membrane-bound cytochrome b6-f and photosystem I in oxygenic photosynthesis. This is Cytochrome c6 (petJ) from Cyanidium caldarium (Red alga).